The sequence spans 129 residues: Small ribosomal subunit protein uS11 (129 aa).

Belongs to the universal ribosomal protein uS11 family. In terms of assembly, part of the 30S ribosomal subunit. Interacts with proteins S7 and S18. Binds to IF-3.

Located on the platform of the 30S subunit, it bridges several disparate RNA helices of the 16S rRNA. Forms part of the Shine-Dalgarno cleft in the 70S ribosome. The chain is Small ribosomal subunit protein uS11 from Aromatoleum aromaticum (strain DSM 19018 / LMG 30748 / EbN1) (Azoarcus sp. (strain EbN1)).